We begin with the raw amino-acid sequence, 811 residues long: tRNA(Met) cytidine acetyltransferase TmcA (811 aa).

Glutamine 267 and arginine 440 together coordinate ATP. The region spanning 474-663 (RKEVYLEEPD…GEFTAIVLKP (190 aa)) is the N-acetyltransferase domain. Residues 590–592 (IAT), glutamate 630, and arginine 637 each bind acetyl-CoA.

It belongs to the TmcA family.

The protein localises to the cytoplasm. It carries out the reaction cytidine(34) in elongator tRNA(Met) + acetyl-CoA + ATP + H2O = N(4)-acetylcytidine(34) in elongator tRNA(Met) + ADP + phosphate + CoA + H(+). The enzyme catalyses a cytidine in RNA + acetyl-CoA + ATP + H2O = an N(4)-acetylcytidine in RNA + ADP + phosphate + CoA + H(+). It catalyses the reaction a cytidine in tRNA + acetyl-CoA + ATP + H2O = an N(4)-acetylcytidine in tRNA + ADP + phosphate + CoA + H(+). The catalysed reaction is a cytidine in mRNA + acetyl-CoA + ATP + H2O = an N(4)-acetylcytidine in mRNA + ADP + phosphate + CoA + H(+). In terms of biological role, catalyzes the formation of N(4)-acetylcytidine (ac(4)C) at the wobble position of tRNA(Met), by using acetyl-CoA as an acetyl donor and ATP (or GTP). Catalyzes the formation of 404 N(4)-acetylcytidine (ac(4)C) sites in RNA, almost always on the middle C of a CCG motif. There 173 ac(4)C sites in rRNA, 35 in non-coding (nc)RNA, 119 in mRNA and 77 in tRNA. More acetylation is observed at 85 and 95 than at 65 or 75 degrees Celsius. The polypeptide is tRNA(Met) cytidine acetyltransferase TmcA (Thermococcus kodakarensis (strain ATCC BAA-918 / JCM 12380 / KOD1) (Pyrococcus kodakaraensis (strain KOD1))).